Consider the following 100-residue polypeptide: Small ribosomal subunit protein uS14c (100 aa).

The protein belongs to the universal ribosomal protein uS14 family. In terms of assembly, part of the 30S ribosomal subunit.

It is found in the plastid. The protein resides in the chloroplast. In terms of biological role, binds 16S rRNA, required for the assembly of 30S particles. The polypeptide is Small ribosomal subunit protein uS14c (Illicium oligandrum (Star anise)).